The sequence spans 333 residues: MKGKLLKGVLSFGIGLGVLYGGSSVQADTSTDQNNTLKVMTHNVYMLSTNLYPNWGQSQRADLIGAADYIKNQDVVILNEVFDNSASDRLLGNLKKEYPNQTAVLGRSNGNEWDKTLGSYSSSTPEDGGVAIVSKWPIVEKIQYVFAKGCGPDNLSNKGFVYTKIKKNDRFVHVIGTHLQAEDSMCGKTSPASVRTNQLKEIQDFIKNKNIPNDEYVLFGGDMNVNKINAENNSDSEYASMFKTLHASIPSYTGHTATWDATTNSIAKYNFPDSPAEYLDYIIASKDHANPSFIENKVLQPKSPQWTVTSWLKKYTYDDYSDHYPVAATISMK.

The signal sequence occupies residues 1-27 (MKGKLLKGVLSFGIGLGVLYGGSSVQA). A disulfide bond links C150 and C186.

Belongs to the neutral sphingomyelinase family. The cofactor is Mg(2+).

It localises to the secreted. It catalyses the reaction a sphingomyelin + H2O = phosphocholine + an N-acylsphing-4-enine + H(+). With respect to regulation, activated by cobalt and manganese ions. Functionally, required, with sphingomyelinase, to effect target cell lysis (hemolysis). This chain is Sphingomyelinase C (sph), found in Bacillus cereus.